Consider the following 314-residue polypeptide: Ribosomal RNA small subunit methyltransferase H (314 aa).

Residues 33 to 35 (GGH), Asp52, Phe84, Asp105, and Gln112 each bind S-adenosyl-L-methionine.

It belongs to the methyltransferase superfamily. RsmH family.

Its subcellular location is the cytoplasm. It carries out the reaction cytidine(1402) in 16S rRNA + S-adenosyl-L-methionine = N(4)-methylcytidine(1402) in 16S rRNA + S-adenosyl-L-homocysteine + H(+). Functionally, specifically methylates the N4 position of cytidine in position 1402 (C1402) of 16S rRNA. The sequence is that of Ribosomal RNA small subunit methyltransferase H from Lactobacillus delbrueckii subsp. bulgaricus (strain ATCC 11842 / DSM 20081 / BCRC 10696 / JCM 1002 / NBRC 13953 / NCIMB 11778 / NCTC 12712 / WDCM 00102 / Lb 14).